The chain runs to 1228 residues: Apical endosomal glycoprotein (1228 aa).

Positions 1 to 21 are cleaved as a signal peptide; it reads MCLPSHLLSTWVLFMAAQSLG. Residues 23–1159 are Extracellular-facing; it reads TWLPNHCRSP…GEVAAPVSVP (1137 aa). The region spanning 28 to 49 is the LDL-receptor class A 1; truncated domain; that stretch reads HCRSPIKAVCNFVCDCGDCSDE. One can recognise an MAM 1 domain in the interval 65–223; that stretch reads FTCNFEQDSC…DDVEFRDCGL (159 aa). N-linked (GlcNAc...) asparagine glycosylation occurs at Asn204. Positions 229–267 constitute an LDL-receptor class A 2 domain; the sequence is RCPLGHHHCQNKACVEPHQLCDGEDNCGDRSDEDPLICS. 3 cysteine pairs are disulfide-bonded: Cys230-Cys242, Cys237-Cys255, and Cys249-Cys266. The 157-residue stretch at 270 to 426 folds into the MAM 2 domain; sequence MATDFETGLG…DLIMSSHCML (157 aa). Residues Asn290 and Asn340 are each glycosylated (N-linked (GlcNAc...) asparagine). Residues 457–492 form the LDL-receptor class A 3 domain; sequence TCEPGHLSCGDLCVPPEQLCDFQKHCAEGEDEHKCG. 3 disulfides stabilise this stretch: Cys458-Cys469, Cys465-Cys482, and Cys476-Cys491. MAM domains are found at residues 492-649, 659-815, 817-975, and 977-1144; these read GTTD…DCNP, LSCN…PCWA, KSCS…PCPQ, and GSCD…QCKQ. Residue Asn641 is glycosylated (N-linked (GlcNAc...) asparagine). N-linked (GlcNAc...) asparagine glycosylation is present at Asn841. A helical transmembrane segment spans residues 1160–1180; it reads VAVGGALLFFMFLVLMGLGGW. Residues 1181–1228 are Cytoplasmic-facing; it reads HWLQKQHCPGQRSTDAAASGFANILFNADHVTLPESITSNPQSPPDLA.

Its subcellular location is the membrane. In terms of biological role, probably involved in the sorting and selective transport of receptors and ligands across polarized epithelia. The sequence is that of Apical endosomal glycoprotein from Mus musculus (Mouse).